Reading from the N-terminus, the 906-residue chain is NACHT, LRR and PYD domains-containing protein 1b allele 4 (906 aa).

The tract at residues M1–D22 is disordered. An NACHT domain is found at Q126 to L435. ATP is bound at residue G132–S139. LRR repeat units follow at residues N627 to C647 and S684 to C704. The FIIND (incomplete) domain maps to F789–R906.

This sequence belongs to the NLRP family. As to expression, expressed in macrophages.

The protein resides in the cytoplasm. It localises to the cytosol. Probable inactive allele of Nlrp1b, which lacks a CARD domain, suggesting that it is not able to form an inflammasome. Contrary to Nlrp1b allele 1, allele 4 is not activated by B.anthracis lethal toxin and no other activation signal is reported. This Mus musculus (Mouse) protein is NACHT, LRR and PYD domains-containing protein 1b allele 4.